Here is a 205-residue protein sequence, read N- to C-terminus: MKKLAFLILLIVFSNLSLVNAIDDNISNYSKEINELTVKLKELESKNPNDERIEEYKEKLKQLIEKQHELKSQNLKYNETLAYIQSEEYWKMQEEIWEYNNKVMKWFIAISILILGIILATLWILRKDKFLLFLAIFGLIVPFLQFKIPNWLFNILALPLFVYIKFIVPECAEGSFYYSPLITIPISMYGWILIGLAVKFIIKKY.

The next 5 helical transmembrane spans lie at 4–24 (LAFL…AIDD), 105–125 (KWFI…LWIL), 130–150 (FLLF…KIPN), 151–171 (WLFN…VPEC), and 182–202 (ITIP…KFII).

It localises to the cell membrane. This is an uncharacterized protein from Methanocaldococcus jannaschii (strain ATCC 43067 / DSM 2661 / JAL-1 / JCM 10045 / NBRC 100440) (Methanococcus jannaschii).